The chain runs to 1070 residues: Envelopment polyprotein (1070 aa).

The N-terminal stretch at 1-17 is a signal peptide; that stretch reads MMFSRVMQLALICAVTC. Residues 18–457 lie on the Lumenal side of the membrane; that stretch reads EDNPCLWERF…SNPQCYPYGK (440 aa). Disulfide bonds link Cys-22–Cys-55, Cys-152–Cys-165, Cys-211–Cys-221, Cys-267–Cys-309, Cys-296–Cys-301, Cys-353–Cys-356, Cys-360–Cys-429, and Cys-380–Cys-385. Asn-269 carries N-linked (GlcNAc...) asparagine; by host glycosylation. A helical membrane pass occupies residues 458 to 478; that stretch reads WFLLFLILATLYIIVALLKTI. Topologically, residues 479–536 are cytoplasmic; that stretch reads MRIFMACLSVLYGPFIIIIKISRCLGRLGKRKGERTYVRLMEALDDERKPEVVRAPVS. Residues 480-522 form a golgi retention signal region; it reads RIFMACLSVLYGPFIIIIKISRCLGRLGKRKGERTYVRLMEAL. Residues 541–560 form an internal signal sequence for glycoprotein C region; the sequence is KQPRIVLFIVLALLVHMALC. The propeptide occupies 550 to 560; that stretch reads VLALLVHMALC. The Lumenal segment spans residues 550–1023; the sequence is VLALLVHMAL…NWLDTLFGAS (474 aa). Intrachain disulfides connect Cys-561/Cys-602, Cys-574/Cys-584, Cys-642/Cys-831, Cys-648/Cys-696, Cys-654/Cys-703, Cys-659/Cys-685, Cys-689/Cys-694, Cys-799/Cys-813, Cys-896/Cys-966, and Cys-906/Cys-909. The interval 648–654 is fusion loop; sequence CRWAGSC. Residues 690-701 form a fusion loop region; it reads GGAACGCFNAAP. Residues 1024 to 1044 form a helical membrane-spanning segment; that stretch reads LLGKILGIGLAILSPFILILI. Over 1045 to 1070 the chain is Cytoplasmic; it reads LRWILRVVLRRSRIRREPKYEMAKYS.

This sequence belongs to the phlebovirus envelope glycoprotein family. As to quaternary structure, heterodimer with glycoprotein C. In terms of assembly, heterodimer with glycoprotein N. Homotrimer (postfusion). Specific enzymatic cleavages in vivo yield mature proteins Glycoprotein C, and Glycoprotein N. Post-translationally, glycosylated. In terms of processing, palmitoylated.

The protein resides in the virion membrane. The protein localises to the host Golgi apparatus membrane. It localises to the host endoplasmic reticulum membrane. Functionally, structural component of the virion that interacts with glycoprotein C. It shields the hydrophobic fusion loops of the glycoprotein C, preventing premature fusion. The glycoprotein protrusions are arranged on an icosahedral lattice, with T=12 triangulation. They are able to attach the virion to the host cell receptor CD209/DC-SIGN and to promote fusion of membranes with the late endosome after endocytosis of the virion. Plays a role in the packaging of ribonucleoproteins during virus assembly. Structural component of the virion that interacts with glycoprotein N. Acts as a class II fusion protein that is activated upon acidification and subsequent repositioning of the glycoprotein N. The glycoprotein protrusions are arranged on an icosahedral lattice, with T=12 triangulation. They are able to attach the virion to the host cell receptor CD209/DC-SIGN and to promote fusion of membranes with the late endosome after endocytosis of the virion. The chain is Envelopment polyprotein (GP) from Amblyomma variegatum (Tropical bont tick).